The sequence spans 352 residues: B1 bradykinin receptor (352 aa).

The Extracellular portion of the chain corresponds to 1–41 (MAAQTLLELQPSNQSQLSALNTTSCDNAREAWDLLYQVLPI). Residues Asn-13 and Asn-21 are each glycosylated (N-linked (GlcNAc...) asparagine). A helical transmembrane segment spans residues 42 to 62 (FILTICAFGLLGNLFVLSVFL). Residues 63–72 (LLRRRLTVAE) are Cytoplasmic-facing. Residues 73-93 (IYLVNLAASDLVFVLGLPFWA) form a helical membrane-spanning segment. The Extracellular segment spans residues 94 to 110 (QNIWNQFNWPFGDLLCR). Residues Cys-109 and Cys-188 are joined by a disulfide bond. A helical transmembrane segment spans residues 111 to 131 (VVNGVIKANLFISIFLMVAIS). The Cytoplasmic portion of the chain corresponds to 132 to 153 (QDRYCVLVHPMASRRRRRRRRA). A helical membrane pass occupies residues 154–174 (RATCMVIWAVGALLSTPTFLL). At 175–206 (RSVSAVQDLNISACILLLPHQAWHVARIVELN) the chain is on the extracellular side. Asn-184 carries N-linked (GlcNAc...) asparagine glycosylation. A helical transmembrane segment spans residues 207 to 227 (VLGFLLPLAAIIFFNGHILAS). At 228–250 (LRGQGEVSQTRIGGPKDCKTTVL) the chain is on the cytoplasmic side. The helical transmembrane segment at 251–271 (ILTLVAAFLVCWAPYHCFAFL) threads the bilayer. Over 272–294 (EFLFQVRAVRGCFWEDFIDLGLQ) the chain is Extracellular. The helical transmembrane segment at 295-315 (LANFFAFTNSCLNPVIYVFVG) threads the bilayer. Topologically, residues 316-326 (RLFRTKVWELY) are cytoplasmic. Cys-329 carries S-palmitoyl cysteine lipidation.

This sequence belongs to the G-protein coupled receptor 1 family. Bradykinin receptor subfamily. BDKRB1 sub-subfamily.

The protein resides in the cell membrane. This is a receptor for bradykinin. Could be a factor in chronic pain and inflammation. The chain is B1 bradykinin receptor (BDKRB1) from Tupaia minor (Pigmy tree shrew).